Reading from the N-terminus, the 316-residue chain is tRNA dimethylallyltransferase (316 aa).

Residue 17 to 24 coordinates ATP; that stretch reads GPTASGKT. Position 19–24 (19–24) interacts with substrate; the sequence is TASGKT. 3 interaction with substrate tRNA regions span residues 42–45, 166–170, and 247–252; these read DSAL, QRLSR, and RCVGYR.

This sequence belongs to the IPP transferase family. As to quaternary structure, monomer. The cofactor is Mg(2+).

It carries out the reaction adenosine(37) in tRNA + dimethylallyl diphosphate = N(6)-dimethylallyladenosine(37) in tRNA + diphosphate. In terms of biological role, catalyzes the transfer of a dimethylallyl group onto the adenine at position 37 in tRNAs that read codons beginning with uridine, leading to the formation of N6-(dimethylallyl)adenosine (i(6)A). This chain is tRNA dimethylallyltransferase, found in Salmonella paratyphi A (strain ATCC 9150 / SARB42).